Reading from the N-terminus, the 128-residue chain is Transcription antitermination protein NusB (128 aa).

It belongs to the NusB family.

Its function is as follows. Involved in transcription antitermination. Required for transcription of ribosomal RNA (rRNA) genes. Binds specifically to the boxA antiterminator sequence of the ribosomal RNA (rrn) operons. This Exiguobacterium sp. (strain ATCC BAA-1283 / AT1b) protein is Transcription antitermination protein NusB.